A 376-amino-acid polypeptide reads, in one-letter code: UDP-N-acetylglucosamine--N-acetylmuramyl-(pentapeptide) pyrophosphoryl-undecaprenol N-acetylglucosamine transferase (376 aa).

Residues 14-16, Asn-128, Arg-169, Ser-201, Ile-256, and Gln-301 each bind UDP-N-acetyl-alpha-D-glucosamine; that span reads TGG.

It belongs to the glycosyltransferase 28 family. MurG subfamily.

The protein resides in the cell inner membrane. The enzyme catalyses di-trans,octa-cis-undecaprenyl diphospho-N-acetyl-alpha-D-muramoyl-L-alanyl-D-glutamyl-meso-2,6-diaminopimeloyl-D-alanyl-D-alanine + UDP-N-acetyl-alpha-D-glucosamine = di-trans,octa-cis-undecaprenyl diphospho-[N-acetyl-alpha-D-glucosaminyl-(1-&gt;4)]-N-acetyl-alpha-D-muramoyl-L-alanyl-D-glutamyl-meso-2,6-diaminopimeloyl-D-alanyl-D-alanine + UDP + H(+). Its pathway is cell wall biogenesis; peptidoglycan biosynthesis. In terms of biological role, cell wall formation. Catalyzes the transfer of a GlcNAc subunit on undecaprenyl-pyrophosphoryl-MurNAc-pentapeptide (lipid intermediate I) to form undecaprenyl-pyrophosphoryl-MurNAc-(pentapeptide)GlcNAc (lipid intermediate II). This chain is UDP-N-acetylglucosamine--N-acetylmuramyl-(pentapeptide) pyrophosphoryl-undecaprenol N-acetylglucosamine transferase, found in Phocaeicola vulgatus (strain ATCC 8482 / DSM 1447 / JCM 5826 / CCUG 4940 / NBRC 14291 / NCTC 11154) (Bacteroides vulgatus).